The sequence spans 86 residues: Protein Vpu (86 aa).

The Extracellular segment spans residues 1-8 (MDIVQQVG). Residues 9–29 (LLVVLIIELVIVIVIWVKVYK) form a helical membrane-spanning segment. Residues 30–86 (LCKEDRRQKKIDRLIARIRERAEDSGNESDGDTEELQDLITEGDNLMHIGIRDNRNN) are Cytoplasmic-facing. Serine 54 and serine 58 each carry phosphoserine; by host CK2.

The protein belongs to the HIV-1 VPU protein family. In terms of assembly, homopentamer. Interacts with host CD4 and BRTC; these interactions induce proteasomal degradation of CD4. Interacts with host BST2; this interaction leads to the degradation of host BST2. Interacts with host FBXW11. Interacts with host AP1M1; this interaction plays a role in the mistrafficking and subsequent degradation of host BST2. Interacts with host RANBP2; this interaction allows Vpu to down-regulate host BLM sumoylation. Forms pentamers or hexamers. Interacts with host CD4 and BRTC; these interactions induce proteasomal degradation of CD4. Interacts with host BST2; this interaction leads to the degradation of host BST2. Interacts with host FBXW11. Interacts with host AP1M1; this interaction plays a role in the mistrafficking and subsequent degradation of host BST2. In terms of processing, phosphorylated by host CK2. This phosphorylation is necessary for interaction with human BTRC and degradation of CD4.

The protein localises to the host membrane. Its activity is regulated as follows. Ion channel activity is inhibited by hexamethylene amiloride in vitro. In terms of biological role, enhances virion budding by targeting host CD4 and Tetherin/BST2 to proteasome degradation. Degradation of CD4 prevents any unwanted premature interactions between viral Env and its host receptor CD4 in the endoplasmic reticulum. Degradation of antiretroviral protein Tetherin/BST2 is important for virion budding, as BST2 tethers new viral particles to the host cell membrane. Mechanistically, Vpu bridges either CD4 or BST2 to BTRC, a substrate recognition subunit of the Skp1/Cullin/F-box protein E3 ubiquitin ligase, induces their ubiquitination and subsequent proteasomal degradation. The alteration of the E3 ligase specificity by Vpu seems to promote the degradation of host IKBKB, leading to NF-kappa-B down-regulation and subsequent apoptosis. Acts as a viroporin that forms an oligomeric ion channel in membranes. Modulates the host DNA repair mechanisms to promote degradation of nuclear viral cDNA in cells that are already productively infected in order to suppress immune sensing and proviral hyper-integration (superinfection). Manipulates PML-NBs and modulates SUMOylation of host BLM protein thereby enhancing its DNA-end processing activity toward viral unintegrated linear DNA. Also inhibits RAD52-mediated homologous repair of viral cDNA, preventing the generation of dead-end circular forms of single copies of the long terminal repeat and permitting sustained nucleolytic attack. The sequence is that of Protein Vpu from Pan troglodytes (Chimpanzee).